The chain runs to 441 residues: UDP-N-acetylmuramoylalanine--D-glutamate ligase (441 aa).

113-119 (GSNAKST) provides a ligand contact to ATP.

It belongs to the MurCDEF family.

The protein resides in the cytoplasm. It carries out the reaction UDP-N-acetyl-alpha-D-muramoyl-L-alanine + D-glutamate + ATP = UDP-N-acetyl-alpha-D-muramoyl-L-alanyl-D-glutamate + ADP + phosphate + H(+). It participates in cell wall biogenesis; peptidoglycan biosynthesis. Functionally, cell wall formation. Catalyzes the addition of glutamate to the nucleotide precursor UDP-N-acetylmuramoyl-L-alanine (UMA). This chain is UDP-N-acetylmuramoylalanine--D-glutamate ligase, found in Alcanivorax borkumensis (strain ATCC 700651 / DSM 11573 / NCIMB 13689 / SK2).